The following is a 618-amino-acid chain: 1-deoxy-D-xylulose-5-phosphate synthase (618 aa).

Residues His70 and 111–113 each bind thiamine diphosphate; that span reads GHS. Asp142 provides a ligand contact to Mg(2+). Thiamine diphosphate-binding positions include 143 to 144, Asn171, Tyr278, and Glu360; that span reads GS. Position 171 (Asn171) interacts with Mg(2+).

Belongs to the transketolase family. DXPS subfamily. Homodimer. It depends on Mg(2+) as a cofactor. Thiamine diphosphate is required as a cofactor.

The catalysed reaction is D-glyceraldehyde 3-phosphate + pyruvate + H(+) = 1-deoxy-D-xylulose 5-phosphate + CO2. It participates in metabolic intermediate biosynthesis; 1-deoxy-D-xylulose 5-phosphate biosynthesis; 1-deoxy-D-xylulose 5-phosphate from D-glyceraldehyde 3-phosphate and pyruvate: step 1/1. Functionally, catalyzes the acyloin condensation reaction between C atoms 2 and 3 of pyruvate and glyceraldehyde 3-phosphate to yield 1-deoxy-D-xylulose-5-phosphate (DXP). In Helicobacter pylori (strain HPAG1), this protein is 1-deoxy-D-xylulose-5-phosphate synthase.